We begin with the raw amino-acid sequence, 133 residues long: Capsid protein (133 aa).

The protein belongs to the Leviviricetes capsid protein family. As to quaternary structure, homodimer. The capsid protein dimer binds to the viral RNA via an operator hairpin, but also many other RNA sequences in the viral genome.

It is found in the virion. Capsid protein self-assembles to form an icosahedral capsid with a T=3 symmetry, about 26 nm in diameter, and consisting of 89 capsid proteins dimers (178 capsid proteins). Involved in viral genome encapsidation through the interaction between a capsid protein dimer and the multiple packaging signals present in the RNA genome. Binding of the capsid proteins to the viral RNA induces a conformational change required for efficient T=3 shell formation. The capsid also contains 1 copy of the A2 maturation protein. Functionally, acts as a translational repressor of viral replicase synthesis late in infection. This latter function is the result of capsid protein interaction with an RNA hairpin which contains the replicase ribosome-binding site. This Escherichia coli protein is Capsid protein.